The primary structure comprises 1755 residues: Transposon Ty1-ML1 Gag-Pol polyprotein (1755 aa).

3 stretches are compositionally biased toward polar residues: residues 1–23 (MESQ…SVTS), 48–60 (TKAN…TPAS), and 127–152 (QSQF…GNTF). Disordered regions lie at residues 1-88 (MESQ…YPQQ), 126-173 (PQSQ…RPPP), and 352-421 (GSRN…SKST). A compositionally biased stretch (low complexity) spans 153–165 (TDSSSADSDMTST). The tract at residues 299 to 401 (NNGIHINNKV…NSKSKTARAH (103 aa)) is RNA-binding. Positions 402–418 (NVSTSNNSPSTDNDSIS) are enriched in low complexity. Asp461 functions as the For protease activity; shared with dimeric partner in the catalytic mechanism. Residues 583–640 (NVHTSESTRKYPYPFIHRMLAHANAQTIRYSLKNNTITYFNESDVDWSSAIDYQCPDC) form an integrase-type zinc finger-like region. The Integrase catalytic domain occupies 660 to 835 (NSYEPFQYLH…AGLDISTLLP (176 aa)). The Mg(2+) site is built by Asp671 and Asp736. Disordered regions lie at residues 956–1087 (SKAV…ETEK), 1092–1111 (RSPS…NIVP), and 1130–1171 (DLPL…DSNA). The span at 960-969 (SPTDSTPPST) shows a compositional bias: low complexity. Over residues 1005–1015 (STPQISNIEST) the composition is skewed to polar residues. Residues 1038 to 1053 (ESSHASKSKDFRHSDS) show a composition bias toward basic and acidic residues. 2 stretches are compositionally biased toward polar residues: residues 1054 to 1082 (YSEN…QISD) and 1101 to 1111 (PENNSSHNIVP). Positions 1178-1212 (KKRSLEDNETEIKVSRDTWNTKNMRSLEPPRSKKR) match the Bipartite nuclear localization signal motif. The Reverse transcriptase Ty1/copia-type domain maps to 1338-1476 (NNYYITQLDI…DILGLEIKYQ (139 aa)). 6 residues coordinate Mg(2+): Asp1346, Asp1427, Asp1428, Asp1610, Glu1652, and Asp1685. One can recognise an RNase H Ty1/copia-type domain in the interval 1610–1752 (DASYGNQPYY…IKTFKLLTNK (143 aa)).

The capsid protein forms a homotrimer, from which the VLPs are assembled. The protease is a homodimer, whose active site consists of two apposed aspartic acid residues. In terms of processing, initially, virus-like particles (VLPs) are composed of the structural unprocessed proteins Gag and Gag-Pol, and also contain the host initiator methionine tRNA (tRNA(i)-Met) which serves as a primer for minus-strand DNA synthesis, and a dimer of genomic Ty RNA. Processing of the polyproteins occurs within the particle and proceeds by an ordered pathway, called maturation. First, the protease (PR) is released by autocatalytic cleavage of the Gag-Pol polyprotein yielding capsid protein p45 and a Pol-p154 precursor protein. This cleavage is a prerequisite for subsequent processing of Pol-p154 at the remaining sites to release the mature structural and catalytic proteins. Maturation takes place prior to the RT reaction and is required to produce transposition-competent VLPs.

Its subcellular location is the cytoplasm. The protein localises to the nucleus. It catalyses the reaction DNA(n) + a 2'-deoxyribonucleoside 5'-triphosphate = DNA(n+1) + diphosphate. The catalysed reaction is Endonucleolytic cleavage to 5'-phosphomonoester.. Functionally, capsid protein (CA) is the structural component of the virus-like particle (VLP), forming the shell that encapsulates the retrotransposons dimeric RNA genome. The particles are assembled from trimer-clustered units and there are holes in the capsid shells that allow for the diffusion of macromolecules. CA also has nucleocapsid-like chaperone activity, promoting primer tRNA(i)-Met annealing to the multipartite primer-binding site (PBS), dimerization of Ty1 RNA and initiation of reverse transcription. Its function is as follows. The aspartyl protease (PR) mediates the proteolytic cleavages of the Gag and Gag-Pol polyproteins after assembly of the VLP. In terms of biological role, reverse transcriptase/ribonuclease H (RT) is a multifunctional enzyme that catalyzes the conversion of the retro-elements RNA genome into dsDNA within the VLP. The enzyme displays a DNA polymerase activity that can copy either DNA or RNA templates, and a ribonuclease H (RNase H) activity that cleaves the RNA strand of RNA-DNA heteroduplexes during plus-strand synthesis and hydrolyzes RNA primers. The conversion leads to a linear dsDNA copy of the retrotransposon that includes long terminal repeats (LTRs) at both ends. Integrase (IN) targets the VLP to the nucleus, where a subparticle preintegration complex (PIC) containing at least integrase and the newly synthesized dsDNA copy of the retrotransposon must transit the nuclear membrane. Once in the nucleus, integrase performs the integration of the dsDNA into the host genome. This chain is Transposon Ty1-ML1 Gag-Pol polyprotein (TY1B-ML1), found in Saccharomyces cerevisiae (strain ATCC 204508 / S288c) (Baker's yeast).